Consider the following 200-residue polypeptide: Oligoribonuclease (200 aa).

Residues methionine 5–leucine 169 form the Exonuclease domain. Tyrosine 126 is a catalytic residue.

Belongs to the oligoribonuclease family.

The protein resides in the cytoplasm. 3'-to-5' exoribonuclease specific for small oligoribonucleotides. The protein is Oligoribonuclease of Streptomyces coelicolor (strain ATCC BAA-471 / A3(2) / M145).